Reading from the N-terminus, the 386-residue chain is Chaperone protein DnaJ (386 aa).

The 65-residue stretch at 5–69 (DLYDVLGVKK…QKRAQYDQFG (65 aa)) folds into the J domain. Residues 140–224 (GKETSIKYNR…CHGAGVTEER (85 aa)) form a CR-type zinc finger. Residues Cys-153, Cys-156, Cys-170, Cys-173, Cys-196, Cys-199, Cys-212, and Cys-215 each contribute to the Zn(2+) site. CXXCXGXG motif repeat units follow at residues 153–160 (CHTCHGSG), 170–177 (CSTCHGQG), 196–203 (CPTCGGKG), and 212–219 (CDTCHGAG).

It belongs to the DnaJ family. As to quaternary structure, homodimer. It depends on Zn(2+) as a cofactor.

It localises to the cytoplasm. Participates actively in the response to hyperosmotic and heat shock by preventing the aggregation of stress-denatured proteins and by disaggregating proteins, also in an autonomous, DnaK-independent fashion. Unfolded proteins bind initially to DnaJ; upon interaction with the DnaJ-bound protein, DnaK hydrolyzes its bound ATP, resulting in the formation of a stable complex. GrpE releases ADP from DnaK; ATP binding to DnaK triggers the release of the substrate protein, thus completing the reaction cycle. Several rounds of ATP-dependent interactions between DnaJ, DnaK and GrpE are required for fully efficient folding. Also involved, together with DnaK and GrpE, in the DNA replication of plasmids through activation of initiation proteins. The protein is Chaperone protein DnaJ of Limosilactobacillus fermentum (strain NBRC 3956 / LMG 18251) (Lactobacillus fermentum).